The sequence spans 469 residues: Cold shock protein CS66 (469 aa).

A run of 21 repeats spans residues Gly9–Glu31, Thr49–Thr62, Gly72–Gln94, Thr95–Ala108, Thr115–Ala128, Thr135–Ala148, Thr149–Thr162, Gly170–Gln192, Thr193–Gly206, Thr213–Thr226, Gly234–Gln256, Thr257–Ala270, Gly277–Thr290, Gly298–Gln320, Thr321–Ala334, Ser341–Thr354, Gly362–Gln384, Thr385–Ala398, Gly405–Thr418, Thr428–Thr441, and Gly452–His469. Positions Gly9 to Gly390 are 7 X 23 AA approximate repeats. Positions Thr49–Thr441 are 14 X 14 AA approximate repeats. The interval Gly87–Thr112 is disordered. Residues Gln93–Thr112 are compositionally biased toward low complexity. The span at Phe203–Gly214 shows a compositional bias: low complexity. The interval Phe203–His469 is disordered. The segment covering Thr233–His254 has biased composition (basic and acidic residues). The segment covering Gln255–Thr274 has biased composition (low complexity). Gly residues predominate over residues Gly288–Lys301. Residues Gly302–Pro312 are compositionally biased toward basic and acidic residues. The segment covering Thr361 to His382 has biased composition (basic and acidic residues). 2 stretches are compositionally biased toward low complexity: residues Gln383–Thr402 and His412–Gly429. Gly residues predominate over residues Gly439–Gly450. Residues Val451–His469 are compositionally biased toward basic and acidic residues.

The protein belongs to the plant dehydrin family.

May reduce intracellular freezing damage during winter by hydrogen-bonding to the lattice of the nascent ice crystals, thus modifying the structure and/or propagation of ice crystals. This Triticum aestivum (Wheat) protein is Cold shock protein CS66 (CS66).